The sequence spans 270 residues: uncharacterized protein (270 aa).

The N-terminal stretch at 1-22 is a signal peptide; that stretch reads MEYIKKLLCTMSVLLLIIFIGG. Cysteine 23 is lipidated: N-palmitoyl cysteine. Residue cysteine 23 is the site of S-diacylglycerol cysteine attachment.

It belongs to the staphylococcal tandem lipoprotein family.

It localises to the cell membrane. This is an uncharacterized protein from Staphylococcus aureus (strain bovine RF122 / ET3-1).